Reading from the N-terminus, the 494-residue chain is Anthranilate synthase component 1 (494 aa).

L-tryptophan is bound by residues Ser50 and 276–278 (PYM). A chorismate-binding site is contributed by 311 to 312 (GT). Glu338 is a Mg(2+) binding site. Chorismate-binding positions include Tyr426, Arg446, 460-462 (GAG), and Gly462. Glu475 provides a ligand contact to Mg(2+).

Belongs to the anthranilate synthase component I family. As to quaternary structure, heterotetramer consisting of two non-identical subunits: a beta subunit (TrpG) and a large alpha subunit (TrpE). The cofactor is Mg(2+).

It carries out the reaction chorismate + L-glutamine = anthranilate + pyruvate + L-glutamate + H(+). Its pathway is amino-acid biosynthesis; L-tryptophan biosynthesis; L-tryptophan from chorismate: step 1/5. Feedback inhibited by tryptophan. Part of a heterotetrameric complex that catalyzes the two-step biosynthesis of anthranilate, an intermediate in the biosynthesis of L-tryptophan. In the first step, the glutamine-binding beta subunit (TrpG) of anthranilate synthase (AS) provides the glutamine amidotransferase activity which generates ammonia as a substrate that, along with chorismate, is used in the second step, catalyzed by the large alpha subunit of AS (TrpE) to produce anthranilate. In the absence of TrpG, TrpE can synthesize anthranilate directly from chorismate and high concentrations of ammonia. The protein is Anthranilate synthase component 1 (trpE) of Acetivibrio thermocellus (Hungateiclostridium thermocellum).